The sequence spans 127 residues: MSDNEDNFDGDDFDDVEEDEGLDDLENAEEEGQVNVEILPSGERPQANQKRITTPYMTKYERARVLGTRALQIAMCAPVMVELEGETDPLLIAMKELKARKIPIIIRRYLPDGSYEDWGVDELIITD.

The span at 1 to 32 (MSDNEDNFDGDDFDDVEEDEGLDDLENAEEEG) shows a compositional bias: acidic residues. Residues 1 to 52 (MSDNEDNFDGDDFDDVEEDEGLDDLENAEEEGQVNVEILPSGERPQANQKRI) are disordered. Ser2 bears the N-acetylserine mark. Ser2 is subject to Phosphoserine; by CK2.

This sequence belongs to the archaeal Rpo6/eukaryotic RPB6 RNA polymerase subunit family. Component of the RNA polymerase I (Pol I), RNA polymerase II (Pol II) and RNA polymerase III (Pol III) complexes consisting of at least 13, 12 and 17 subunits, respectively. Pol I complex consists of a ten-subunit catalytic core composed of POLR1A/RPA1, POLR1B/RPA2, POLR1C/RPAC1, POLR1D/RPAC2, POLR1H/RPA12, POLR2E/RPABC1, POLR2F/RPABC2, POLR2H/RPABC3, POLR2K/RPABC4 and POLR2L/RPABC5; a mobile stalk subunit POLR1F/RPA43 protruding from the core and additional subunits homologous to general transcription factors POLR1E/RPA49 and POLR1G/RPA34. Part of Pol I pre-initiation complex (PIC), in which Pol I core assembles with RRN3 and promoter-bound UTBF and SL1/TIF-IB complex. Pol II complex contains a ten-subunit catalytic core composed of POLR2A/RPB1, POLR2B/RPB2, POLR2C/RPB3, POLR2I/RPB9, POLR2J/RPB11, POLR2E/RPABC1, POLR2F/RPABC2, POLR2H/RPABC3, POLR2K/RPABC4 and POLR2L/RPABC5 and a mobile stalk composed of two subunits POLR2D/RPB4 and POLR2G/RPB7. Part of Pol II(G) complex, in which Pol II core associates with an additional subunit POLR2M; unlike conventional Pol II, Pol II(G) functions as a transcriptional repressor. Part of TBP-based Pol II pre-initiation complex (PIC), in which Pol II core assembles with general transcription factors and other specific initiation factors including GTF2E1, GTF2E2, GTF2F1, GTF2F2, TCEA1, ERCC2, ERCC3, GTF2H2, GTF2H3, GTF2H4, GTF2H5, GTF2A1, GTF2A2, GTF2B and TBP; this large multi-subunit PIC complex mediates DNA unwinding and targets Pol II core to the transcription start site where the first phosphodiester bond forms. Pol III complex consists of a ten-subunit catalytic core composed of POLR3A/RPC1, POLR3B/RPC2, POLR1C/RPAC1, POLR1D/RPAC2, POLR3K/RPC10, POLR2E/RPABC1, POLR2F/RPABC2, POLR2H/RPABC3, POLR2K/RPABC4 and POLR2L/RPABC5; a mobile stalk composed of two subunits POLR3H/RPC8 and CRCP/RPC9, protruding from the core and functioning primarily in transcription initiation; and additional subunits homologous to general transcription factors of the RNA polymerase II machinery, POLR3C/RPC3-POLR3F/RPC6-POLR3G/RPC7 heterotrimer required for transcription initiation and POLR3D/RPC4-POLR3E/RPC5 heterodimer involved in both transcription initiation and termination.

It is found in the nucleus. The protein resides in the nucleolus. In terms of biological role, DNA-dependent RNA polymerase catalyzes the transcription of DNA into RNA using the four ribonucleoside triphosphates as substrates. Common component of RNA polymerases I, II, and III which synthesize ribosomal RNA precursors, mRNA precursors and many functional non-coding RNAs, and small RNAs, such as 5S rRNA and tRNAs, respectively. Pol II is the central component of the basal RNA polymerase II transcription machinery. Pols are composed of mobile elements that move relative to each other. In Pol II, POLR2F/RPABC2 is part of the clamp element and together with parts of POLR2A/RPB1 and POLR2B/RPB2 forms a pocket to which the POLR2D/RPB4-POLR2G/RPB7 subcomplex binds. The polypeptide is DNA-directed RNA polymerases I, II, and III subunit RPABC2 (POLR2F) (Bos taurus (Bovine)).